The chain runs to 96 residues: UPF0729 protein AGAP000931 (96 aa).

The segment at valine 65–leucine 96 is disordered. Residues threonine 75 to leucine 96 show a composition bias toward low complexity.

This sequence belongs to the UPF0729 family.

This is UPF0729 protein AGAP000931 from Anopheles gambiae (African malaria mosquito).